We begin with the raw amino-acid sequence, 270 residues long: Phosphodiesterase YaeI (270 aa).

A divalent metal cation is bound by residues D56, H58, D88, N120, H209, and H211.

It belongs to the metallophosphoesterase superfamily. It depends on a divalent metal cation as a cofactor.

In terms of biological role, shows phosphodiesterase activity, hydrolyzing phosphodiester bond in the artificial chromogenic substrate bis-p-nitrophenyl phosphate (bis-pNPP). The polypeptide is Phosphodiesterase YaeI (yaeI) (Escherichia coli (strain K12)).